A 53-amino-acid chain; its full sequence is MEAAGGFQVHFHPSNGDGRFIETSSAADLEVISYSSKVSVTERCFIKVCTVLF.

This is an uncharacterized protein from Homo sapiens (Human).